The chain runs to 34 residues: uncharacterized protein (34 aa).

The helical transmembrane segment at Leu10–Ile30 threads the bilayer.

It localises to the membrane. This is an uncharacterized protein from Escherichia coli O157:H7.